Reading from the N-terminus, the 148-residue chain is Deoxyuridine 5'-triphosphate nucleotidohydrolase (148 aa).

Substrate-binding positions include 67–69, Asn80, 84–86, and Met94; these read RSG and LID.

The protein belongs to the dUTPase family. Mg(2+) serves as cofactor.

It carries out the reaction dUTP + H2O = dUMP + diphosphate + H(+). It functions in the pathway pyrimidine metabolism; dUMP biosynthesis; dUMP from dCTP (dUTP route): step 2/2. Its function is as follows. This enzyme is involved in nucleotide metabolism: it produces dUMP, the immediate precursor of thymidine nucleotides and it decreases the intracellular concentration of dUTP so that uracil cannot be incorporated into DNA. This is Deoxyuridine 5'-triphosphate nucleotidohydrolase from Burkholderia ambifaria (strain ATCC BAA-244 / DSM 16087 / CCUG 44356 / LMG 19182 / AMMD) (Burkholderia cepacia (strain AMMD)).